The following is a 76-amino-acid chain: Exodeoxyribonuclease 7 small subunit (76 aa).

Belongs to the XseB family. Heterooligomer composed of large and small subunits.

The protein resides in the cytoplasm. It catalyses the reaction Exonucleolytic cleavage in either 5'- to 3'- or 3'- to 5'-direction to yield nucleoside 5'-phosphates.. Bidirectionally degrades single-stranded DNA into large acid-insoluble oligonucleotides, which are then degraded further into small acid-soluble oligonucleotides. The chain is Exodeoxyribonuclease 7 small subunit from Geotalea uraniireducens (strain Rf4) (Geobacter uraniireducens).